Here is a 166-residue protein sequence, read N- to C-terminus: MPRSQKNDNFIDKTFTVVADILLKVLPTTRNEKEAFVYYRDGMSAQAEGEYAEALQNYAQAMRLEVDPYDRSFIFYNIGLIHTSNGEHTKALEYYYQALDRNPSLPQALNNIAVIYHYRGEQALAAGNIPDSETLFEKAAEYWKEAIRLAPLNYSEAQNWLQTTGR.

TPR repeat units follow at residues Ala-35 to Pro-68, Ser-72 to Leu-105, and Gly-120 to Asn-153.

It belongs to the Ycf3 family.

It localises to the plastid. The protein localises to the chloroplast thylakoid membrane. In terms of biological role, essential for the assembly of the photosystem I (PSI) complex. May act as a chaperone-like factor to guide the assembly of the PSI subunits. This is Photosystem I assembly protein Ycf3 from Ostreococcus tauri.